Reading from the N-terminus, the 485-residue chain is Glycinin G2 (485 aa).

A signal peptide spans 1–18 (MAKLVLSLCFLLFSGCFA). 2 disulfides stabilise this stretch: cysteine 28-cysteine 61 and cysteine 104-cysteine 307. In terms of domain architecture, Cupin type-1 1 spans 33 to 238 (LNALKPDNRI…AFGVNMQIVR (206 aa)). Over residues 108 to 118 (YQEPQESQQRG) the composition is skewed to polar residues. Disordered stretches follow at residues 108 to 130 (YQEP…HQKV), 192 to 215 (YQQQ…NEGS), and 262 to 298 (TAPA…SKRS). Over residues 192 to 205 (YQQQQQGGSQSQKG) the composition is skewed to low complexity. Acidic residues predominate over residues 272–281 (EEDDDDEEEQ). Positions 297–300 (RSRN) are excised as a propeptide. In terms of domain architecture, Cupin type-1 2 spans 313–462 (QNIGQNSSPD…TFNLKSQQAR (150 aa)). The Vacuolar targeting signal signature appears at 476–485 (PQESQRRAVA). Residues 481-485 (RRAVA) constitute a propeptide that is removed on maturation.

It belongs to the 11S seed storage protein (globulins) family. As to quaternary structure, hexamer; each subunit is composed of an acidic and a basic chain derived from a single precursor and linked by a disulfide bond. During soybean germination, seed storage proteins are hydrolyzed by protease/26S proteasome. As to expression, exclusively in seeds during embryogenesis.

The protein resides in the endoplasmic reticulum. The protein localises to the protein storage vacuole. Functionally, glycinin is the major seed storage protein of soybean. Glycinin basic peptides (GBPs), and, to a lower extent, glycinin exhibit antibacterial activity against Gram-negative and Gram-positive bacteria (e.g. L.monocytogenes, B.subtilis, E.coli and S.enteritidis) by forming pores and aggregating in transmembranes, leading to membrane permeability and, eventually, cell death. This chain is Glycinin G2, found in Glycine max (Soybean).